The chain runs to 414 residues: Cytochrome b (414 aa).

The next 2 helical transmembrane spans lie at 40 to 60 (FFGS…VWLA) and 84 to 104 (GWLI…VIYL). Residues His91 and His105 each contribute to the heme b site. The next 8 helical transmembrane spans lie at 121-141 (LLWM…FFGY), 154-174 (QVIV…SVWV), 188-208 (FFAF…LHIV), 252-272 (LMGV…NPTM), 294-314 (IAPV…PPMY), 317-337 (QFPG…LPWL), 351-371 (IFKW…WLGI), and 378-398 (YTLL…LMPI). The heme b site is built by His192 and His206.

It belongs to the cytochrome b family. In terms of assembly, the main subunits of complex b-c1 are: cytochrome b, cytochrome c1 and the Rieske protein. Requires heme b as cofactor.

Its subcellular location is the cell membrane. Its function is as follows. Component of the ubiquinol-cytochrome c reductase complex (complex III or cytochrome b-c1 complex), which is a respiratory chain that generates an electrochemical potential coupled to ATP synthesis. This chain is Cytochrome b (petB), found in Allochromatium vinosum (strain ATCC 17899 / DSM 180 / NBRC 103801 / NCIMB 10441 / D) (Chromatium vinosum).